A 266-amino-acid polypeptide reads, in one-letter code: MKLSLSPPPYADAPVVVLISGLGGSGSYWLPQLAVLEQEYQVVCYDQRGTGNNPDTLAEDYSIAQMAAELHQALVAAGIEHYAVVGHALGALVGMQLALDYPASVTVLISVNGWLRINAHTRRCFQVRERLLYSGGAQAWVEAQPLFLYPADWMAARAPRLEAEDALALAHFQGKNNLLRRLNALKRADFSHHADRIRCPVQIICASDDLLVPSACSSELHAALPDSQKMVMPYGGHACNVTDPETFNALLLNGLASLLHHREAAL.

Belongs to the AB hydrolase superfamily. Hydrolase RutD family.

The catalysed reaction is carbamate + 2 H(+) = NH4(+) + CO2. Functionally, involved in pyrimidine catabolism. May facilitate the hydrolysis of carbamate, a reaction that can also occur spontaneously. In Escherichia coli O111:H- (strain 11128 / EHEC), this protein is Putative carbamate hydrolase RutD.